A 156-amino-acid chain; its full sequence is Small ribosomal subunit protein uS7 (156 aa).

This sequence belongs to the universal ribosomal protein uS7 family. As to quaternary structure, part of the 30S ribosomal subunit. Contacts proteins S9 and S11.

Its function is as follows. One of the primary rRNA binding proteins, it binds directly to 16S rRNA where it nucleates assembly of the head domain of the 30S subunit. Is located at the subunit interface close to the decoding center, probably blocks exit of the E-site tRNA. In Sphingopyxis alaskensis (strain DSM 13593 / LMG 18877 / RB2256) (Sphingomonas alaskensis), this protein is Small ribosomal subunit protein uS7.